A 399-amino-acid polypeptide reads, in one-letter code: Elongation factor Tu (399 aa).

The tr-type G domain maps to 10–204; that stretch reads KPHVNIGTIG…AVDASIPEPE (195 aa). Positions 19 to 26 are G1; that stretch reads GHVDHGKT. Residue 19-26 participates in GTP binding; the sequence is GHVDHGKT. Residue Thr26 coordinates Mg(2+). A G2 region spans residues 60–64; it reads GITIN. Positions 81–84 are G3; it reads DCPG. GTP is bound by residues 81-85 and 136-139; these read DCPGH and NKCD. The tract at residues 136-139 is G4; the sequence is NKCD. Residues 174-176 form a G5 region; it reads SGL.

It belongs to the TRAFAC class translation factor GTPase superfamily. Classic translation factor GTPase family. EF-Tu/EF-1A subfamily. In terms of assembly, monomer.

Its subcellular location is the cytoplasm. The enzyme catalyses GTP + H2O = GDP + phosphate + H(+). In terms of biological role, GTP hydrolase that promotes the GTP-dependent binding of aminoacyl-tRNA to the A-site of ribosomes during protein biosynthesis. The polypeptide is Elongation factor Tu (Prochlorococcus marinus (strain MIT 9215)).